Reading from the N-terminus, the 481-residue chain is Sialic acid-binding Ig-like lectin 16 (481 aa).

The first 16 residues, 1–16 (MLLLPLLLPVLGAGSL), serve as a signal peptide directing secretion. Topologically, residues 17–434 (NKDPSYSLQV…VHCKSGPMTG (418 aa)) are extracellular. An Ig-like V-type domain is found at 19-122 (DPSYSLQVQR…DEAWYFFRVE (104 aa)). Disulfide bonds link Cys37–Cys174, Cys42–Cys102, Cys165–Cys216, and Cys259–Cys306. N-linked (GlcNAc...) asparagine glycosylation is found at Asn43 and Asn78. Position 120 (Arg120) interacts with N-acetylneuraminate. Ig-like C2-type domains follow at residues 147 to 232 (PDVY…RTVR), 238 to 322 (LELQ…LDLS), and 327 to 424 (PENL…LSFS). Asn338 and Asn347 each carry an N-linked (GlcNAc...) asparagine glycan. A disulfide bridge links Cys363 with Cys408. The helical transmembrane segment at 435–455 (VVLVAVGEVAMKILLLCLCLI) threads the bilayer. Topologically, residues 456–481 (LLRVRSCRRKAARAALGMEAADAVTD) are cytoplasmic.

Belongs to the immunoglobulin superfamily. SIGLEC (sialic acid binding Ig-like lectin) family. In terms of tissue distribution, expressed in bone marrow, fetal brain, fetal liver, lung and salivary gland. Detected in brain, macrophage, cancerous esophagus and lung at protein level.

Its subcellular location is the membrane. Putative adhesion molecule that mediates sialic-acid dependent binding to cells. The protein is Sialic acid-binding Ig-like lectin 16 (SIGLEC16) of Homo sapiens (Human).